A 236-amino-acid polypeptide reads, in one-letter code: tRNA (guanine-N(7)-)-methyltransferase (236 aa).

The S-adenosyl-L-methionine site is built by Glu43, Asp68, Asn102, and Asn125. Substrate contacts are provided by Lys129 and Asp161.

The protein belongs to the class I-like SAM-binding methyltransferase superfamily. TrmB family.

It carries out the reaction guanosine(46) in tRNA + S-adenosyl-L-methionine = N(7)-methylguanosine(46) in tRNA + S-adenosyl-L-homocysteine. Its pathway is tRNA modification; N(7)-methylguanine-tRNA biosynthesis. In terms of biological role, catalyzes the formation of N(7)-methylguanine at position 46 (m7G46) in tRNA. In Ruminiclostridium cellulolyticum (strain ATCC 35319 / DSM 5812 / JCM 6584 / H10) (Clostridium cellulolyticum), this protein is tRNA (guanine-N(7)-)-methyltransferase.